Reading from the N-terminus, the 243-residue chain is DNA repair protein RecO (243 aa).

The protein belongs to the RecO family.

In terms of biological role, involved in DNA repair and RecF pathway recombination. This chain is DNA repair protein RecO, found in Geobacter sulfurreducens (strain ATCC 51573 / DSM 12127 / PCA).